The sequence spans 138 residues: Basic leucine zipper 8 (138 aa).

The segment at Asn30–Gln67 is disordered. Basic and acidic residues predominate over residues Asp37 to Arg47. A bZIP domain is found at Asn45–Leu108. The basic motif stretch occupies residues Arg47–Arg68. Residues Lys48–Asn55 carry the Nuclear localization signal motif. The segment at Leu73–Leu87 is leucine-zipper.

Belongs to the bZIP family. In terms of assembly, homodimer.

It is found in the nucleus. The sequence is that of Basic leucine zipper 8 from Arabidopsis thaliana (Mouse-ear cress).